A 268-amino-acid polypeptide reads, in one-letter code: MINIQNTILGKIVDRKHEDLAARLKQRNLQDVEELAKAATPVRGFANALQHKRPGVIAEIKKASPSKGIIRADFNPAEIAQQYEQAGAACLSVLTDVDFFQGADENIAIARNHCTLPALRKDFLVDPYNVVEARALHADCILLIVACLSDQQLEEMSKTAFEHQLDVLVEVHDEEELERALKLSEQCLLGVNNRNLKTFDVDLNTTIRLKKLLPASRLLITESGIATPDDVRMMQEHDIHSFLVGESFMKQPRPDQAFTALFGQPQTV.

Belongs to the TrpC family.

It catalyses the reaction 1-(2-carboxyphenylamino)-1-deoxy-D-ribulose 5-phosphate + H(+) = (1S,2R)-1-C-(indol-3-yl)glycerol 3-phosphate + CO2 + H2O. It functions in the pathway amino-acid biosynthesis; L-tryptophan biosynthesis; L-tryptophan from chorismate: step 4/5. The polypeptide is Indole-3-glycerol phosphate synthase (Acinetobacter baumannii (strain SDF)).